The sequence spans 173 residues: MSIILGVDPGSRITGYGVIQCIGRHQTYLGSGCIRTASDDLPYRLKQIFDGVSEIIRQYQPDEFAIERVFMAKNADSALKLGQARGAAIVAATNADLPVAEYSATQIKSAVVGTGKAQKSQVQHMVQQILKLPAAPQADAADALGVAICHFHTSQSLIALGGRANARTYGRYR.

Residues D8, E67, and D139 contribute to the active site. Mg(2+) contacts are provided by D8, E67, and D139.

This sequence belongs to the RuvC family. In terms of assembly, homodimer which binds Holliday junction (HJ) DNA. The HJ becomes 2-fold symmetrical on binding to RuvC with unstacked arms; it has a different conformation from HJ DNA in complex with RuvA. In the full resolvosome a probable DNA-RuvA(4)-RuvB(12)-RuvC(2) complex forms which resolves the HJ. The cofactor is Mg(2+).

Its subcellular location is the cytoplasm. It catalyses the reaction Endonucleolytic cleavage at a junction such as a reciprocal single-stranded crossover between two homologous DNA duplexes (Holliday junction).. In terms of biological role, the RuvA-RuvB-RuvC complex processes Holliday junction (HJ) DNA during genetic recombination and DNA repair. Endonuclease that resolves HJ intermediates. Cleaves cruciform DNA by making single-stranded nicks across the HJ at symmetrical positions within the homologous arms, yielding a 5'-phosphate and a 3'-hydroxyl group; requires a central core of homology in the junction. The consensus cleavage sequence is 5'-(A/T)TT(C/G)-3'. Cleavage occurs on the 3'-side of the TT dinucleotide at the point of strand exchange. HJ branch migration catalyzed by RuvA-RuvB allows RuvC to scan DNA until it finds its consensus sequence, where it cleaves and resolves the cruciform DNA. In Shewanella sediminis (strain HAW-EB3), this protein is Crossover junction endodeoxyribonuclease RuvC.